A 230-amino-acid polypeptide reads, in one-letter code: D-glycero-alpha-D-manno-heptose 1-phosphate guanylyltransferase (230 aa).

It belongs to the D-alpha-D-heptose-1-P guanylyltransferase family.

It catalyses the reaction D-glycero-alpha-D-manno-heptose 1-phosphate + GTP + H(+) = GDP-D-glycero-alpha-D-manno-heptose + diphosphate. The protein operates within nucleotide-sugar biosynthesis; GDP-D-glycero-alpha-D-manno-heptose biosynthesis; GDP-D-glycero-alpha-D-manno-heptose from D-glycero-alpha-D-manno-heptose 7-phosphate: step 3/3. Its pathway is cell surface structure biogenesis; S-layer biogenesis. Its function is as follows. Catalyzes the GDP transfer from GTP to D-glycero-alpha-D-manno-heptose 1-phosphate, yielding GDP-D-alpha-D-heptose. Cannot use ATP, CTP, dTTP or UTP as substrate. The chain is D-glycero-alpha-D-manno-heptose 1-phosphate guanylyltransferase (hddC) from Aneurinibacillus thermoaerophilus.